Here is a 340-residue protein sequence, read N- to C-terminus: Porphobilinogen deaminase (340 aa).

Cys258 carries the S-(dipyrrolylmethanemethyl)cysteine modification.

It belongs to the HMBS family. Dipyrromethane serves as cofactor.

The enzyme catalyses 4 porphobilinogen + H2O = hydroxymethylbilane + 4 NH4(+). The protein operates within porphyrin-containing compound metabolism; protoporphyrin-IX biosynthesis; coproporphyrinogen-III from 5-aminolevulinate: step 2/4. Its function is as follows. Tetrapolymerization of the monopyrrole PBG into the hydroxymethylbilane pre-uroporphyrinogen in several discrete steps. This Candida albicans (strain SC5314 / ATCC MYA-2876) (Yeast) protein is Porphobilinogen deaminase (HEM3).